A 78-amino-acid polypeptide reads, in one-letter code: Exodeoxyribonuclease 7 small subunit (78 aa).

This sequence belongs to the XseB family. Heterooligomer composed of large and small subunits.

Its subcellular location is the cytoplasm. It carries out the reaction Exonucleolytic cleavage in either 5'- to 3'- or 3'- to 5'-direction to yield nucleoside 5'-phosphates.. Its function is as follows. Bidirectionally degrades single-stranded DNA into large acid-insoluble oligonucleotides, which are then degraded further into small acid-soluble oligonucleotides. This is Exodeoxyribonuclease 7 small subunit from Oceanobacillus iheyensis (strain DSM 14371 / CIP 107618 / JCM 11309 / KCTC 3954 / HTE831).